Here is a 338-residue protein sequence, read N- to C-terminus: Aspartate carbamoyltransferase catalytic subunit (338 aa).

Residues R72 and T73 each coordinate carbamoyl phosphate. K100 is an L-aspartate binding site. Residues R122, H152, and Q155 each coordinate carbamoyl phosphate. 2 residues coordinate L-aspartate: R186 and R243. Carbamoyl phosphate contacts are provided by G284 and P285.

The protein belongs to the aspartate/ornithine carbamoyltransferase superfamily. ATCase family. As to quaternary structure, heterododecamer (2C3:3R2) of six catalytic PyrB chains organized as two trimers (C3), and six regulatory PyrI chains organized as three dimers (R2).

The catalysed reaction is carbamoyl phosphate + L-aspartate = N-carbamoyl-L-aspartate + phosphate + H(+). It functions in the pathway pyrimidine metabolism; UMP biosynthesis via de novo pathway; (S)-dihydroorotate from bicarbonate: step 2/3. Its function is as follows. Catalyzes the condensation of carbamoyl phosphate and aspartate to form carbamoyl aspartate and inorganic phosphate, the committed step in the de novo pyrimidine nucleotide biosynthesis pathway. The protein is Aspartate carbamoyltransferase catalytic subunit of Acinetobacter baumannii (strain ACICU).